The chain runs to 497 residues: Ankyrin repeat domain-containing protein 53 (497 aa).

The segment covering 1-10 has biased composition (basic residues); it reads MRRPSRRRSK. Residues 1 to 65 form a disordered region; the sequence is MRRPSRRRSK…VSSPNSESSQ (65 aa). Low complexity predominate over residues 12-27; the sequence is STPPRSHTTPRRTGPS. Positions 28–39 are enriched in basic and acidic residues; the sequence is DSRRRPGTKEQP. ANK repeat units follow at residues 110 to 140, 144 to 177, and 181 to 210; these read KGFTAIHFAAQKCQLSCLKVLIEEYKYPVDL, KGQTPLHLVIHKNNKSDILPCIDYLLKKGAAINS, and NGSTPLHLASCNGLLGCIKLLVQSGANVHA. Residues 239–264 are a coiled coil; that stretch reads WKHDKKVLAQEMEKLRTLKEKLTILE.

As to quaternary structure, interacts with PSRC1; recruited by PSRC1 to the spindle during mitosis. In terms of processing, phosphorylated during mitosis.

It localises to the cytoplasm. It is found in the cytoskeleton. The protein resides in the spindle. Its subcellular location is the spindle pole. Functionally, required for normal progression through mitosis. Involved in chromosome alignment and cytokinesis via regulation of microtubules polymerization. The sequence is that of Ankyrin repeat domain-containing protein 53 (Ankrd53) from Mus musculus (Mouse).